The sequence spans 601 residues: Glutamine--fructose-6-phosphate aminotransferase [isomerizing] (601 aa).

The active-site Nucleophile; for GATase activity is the C2. The region spanning C2–D218 is the Glutamine amidotransferase type-2 domain. 2 SIS domains span residues I284–R423 and I453–P591. K596 serves as the catalytic For Fru-6P isomerization activity.

As to quaternary structure, homodimer.

Its subcellular location is the cytoplasm. The catalysed reaction is D-fructose 6-phosphate + L-glutamine = D-glucosamine 6-phosphate + L-glutamate. In terms of biological role, catalyzes the first step in hexosamine metabolism, converting fructose-6P into glucosamine-6P using glutamine as a nitrogen source. The chain is Glutamine--fructose-6-phosphate aminotransferase [isomerizing] from Staphylococcus epidermidis (strain ATCC 35984 / DSM 28319 / BCRC 17069 / CCUG 31568 / BM 3577 / RP62A).